The chain runs to 604 residues: Aspartate--tRNA(Asp/Asn) ligase (604 aa).

Residue Glu-175 coordinates L-aspartate. Residues 199–202 (QQFK) are aspartate. 2 residues coordinate L-aspartate: Arg-221 and His-456. 221 to 223 (RDE) contributes to the ATP binding site. An ATP-binding site is contributed by Glu-496. Residue Arg-503 participates in L-aspartate binding. 548–551 (GVDR) contributes to the ATP binding site.

This sequence belongs to the class-II aminoacyl-tRNA synthetase family. Type 1 subfamily. As to quaternary structure, homodimer.

The protein resides in the cytoplasm. It carries out the reaction tRNA(Asx) + L-aspartate + ATP = L-aspartyl-tRNA(Asx) + AMP + diphosphate. Functionally, aspartyl-tRNA synthetase with relaxed tRNA specificity since it is able to aspartylate not only its cognate tRNA(Asp) but also tRNA(Asn). Reaction proceeds in two steps: L-aspartate is first activated by ATP to form Asp-AMP and then transferred to the acceptor end of tRNA(Asp/Asn). The chain is Aspartate--tRNA(Asp/Asn) ligase from Methylorubrum populi (strain ATCC BAA-705 / NCIMB 13946 / BJ001) (Methylobacterium populi).